A 355-amino-acid polypeptide reads, in one-letter code: Phosphoribosylformylglycinamidine cyclo-ligase (355 aa).

The protein belongs to the AIR synthase family.

Its subcellular location is the cytoplasm. The catalysed reaction is 2-formamido-N(1)-(5-O-phospho-beta-D-ribosyl)acetamidine + ATP = 5-amino-1-(5-phospho-beta-D-ribosyl)imidazole + ADP + phosphate + H(+). It participates in purine metabolism; IMP biosynthesis via de novo pathway; 5-amino-1-(5-phospho-D-ribosyl)imidazole from N(2)-formyl-N(1)-(5-phospho-D-ribosyl)glycinamide: step 2/2. In Paraburkholderia xenovorans (strain LB400), this protein is Phosphoribosylformylglycinamidine cyclo-ligase.